The chain runs to 333 residues: Taste receptor type 2 member 38 (333 aa).

Residues 1–17 (MLTLTRIRTVSYEVRST) lie on the Extracellular side of the membrane. Residues 18-38 (FLFISVLEFAVGFLTNAFVFL) traverse the membrane as a helical segment. Topologically, residues 39–55 (VNFWDVVKRQPLSNSDC) are cytoplasmic. A helical membrane pass occupies residues 56-76 (VLLCLSISRLFLHGLLFLSAI). At 77–94 (QLTHFQKLSEPLNHSYQA) the chain is on the extracellular side. The helical transmembrane segment at 95–115 (IIMLWMIANQANLWLAACLSL) threads the bilayer. Topologically, residues 116–142 (LYCSKLIRFSHTFLICLASWVSRKISQ) are cytoplasmic. Residues 143-163 (MLLGIILCSCICTVLCVWCFF) form a helical membrane-spanning segment. The Extracellular segment spans residues 164–190 (SRPHFTVTTVLFMNNNTRLNWQIKDLN). Asn-178 carries an N-linked (GlcNAc...) asparagine glycan. Residues 191–211 (LFYSFLFCYLWSVPPFLLFLV) form a helical membrane-spanning segment. Residues 212 to 251 (SSGMLTVSLGRHMRTMKVYIRDSRDPSLEAHIKALKSLVS) are Cytoplasmic-facing. A helical transmembrane segment spans residues 252 to 272 (FFCFFVISSCAAFISVPLLIL). Residues 273 to 276 (WRDK) are Extracellular-facing. Residues 277–297 (IGVMVCVGIMAACPSGHAAVL) form a helical membrane-spanning segment. Over 298 to 333 (ISGNAKLRRAVTTILLWAQSSLKVRADHKADSRTPC) the chain is Cytoplasmic.

Belongs to the G-protein coupled receptor T2R family.

The protein resides in the membrane. Its function is as follows. Receptor that may play a role in the perception of bitterness and is gustducin-linked. May play a role in sensing the chemical composition of the gastrointestinal content. The activity of this receptor may stimulate alpha gustducin, mediate PLC-beta-2 activation and lead to the gating of TRPM5. The chain is Taste receptor type 2 member 38 (TAS2R38) from Gorilla gorilla gorilla (Western lowland gorilla).